Consider the following 252-residue polypeptide: MKILISNDDGFQAPGIVALHDALKDIADVEVVAPEHNNSAKSNALTLAAPLYVHKAHNGFRYVTGTPADCVHIALKGLLGYRPDLVVSGINNGANMGDDTIYSGTVGAAMEAYLFGIPAIAFSQIEKGWAHVDAAAQVARRLVQQIERERMLDGGAFLLNVNVPNRPLQELKPIQVCRLGRRHSAEKVITQESPRGETMYWIAGAGGAKDSGEGTDFHATAAGHIALTPLQIDLTDHANLGQWRETVARLGN.

A divalent metal cation-binding residues include D8, D9, S39, and N91.

It belongs to the SurE nucleotidase family. A divalent metal cation is required as a cofactor.

Its subcellular location is the cytoplasm. It catalyses the reaction a ribonucleoside 5'-phosphate + H2O = a ribonucleoside + phosphate. In terms of biological role, nucleotidase that shows phosphatase activity on nucleoside 5'-monophosphates. The polypeptide is 5'-nucleotidase SurE (Variovorax paradoxus (strain S110)).